Reading from the N-terminus, the 36-residue chain is Photosystem I reaction center subunit VIII (36 aa).

A helical transmembrane segment spans residues S8–L28.

It belongs to the PsaI family.

It is found in the plastid. The protein localises to the chloroplast thylakoid membrane. In terms of biological role, may help in the organization of the PsaL subunit. This chain is Photosystem I reaction center subunit VIII, found in Daucus carota (Wild carrot).